The primary structure comprises 357 residues: MSIQIQGVSKQYGTFQALTDIHLDIPKGELVALLGPSGSGKTTLLRIIAGLEEADEGSISFEGEDLTDIHVKNRQVGFVFQHYALFKHMNVFENVAFGLKVRKKSLRPSAEAIEEKVTELLKLVKMDGFAKRYPAQLSGGQRQRIALARALAVEPKILLLDEPFGALDAKVRKELRRWLRKLHDEFQITSVFVTHDQEEALDVADRIVVMNEGRIEQMGTPEEVYENPASPFVYDFLGNVNLFHGRVHKGKLNVGSVELEAPEHKHISNVDGVAYVRPHHLSISRTKQSVDAIPAKVSYSHAVGPVVYVELKRDGTDEYLEAEISKEQFRQLSIQAGDVVYVQPKEVKVFIPEDFVI.

The 235-residue stretch at 3-237 (IQIQGVSKQY…PASPFVYDFL (235 aa)) folds into the ABC transporter domain. 35–42 (GPSGSGKT) provides a ligand contact to ATP.

The protein belongs to the ABC transporter superfamily. Sulfate/tungstate importer (TC 3.A.1.6) family. As to quaternary structure, the complex is composed of two ATP-binding proteins (CysA), two transmembrane proteins (CysT and CysW) and a solute-binding protein (CysP).

The protein localises to the cell membrane. It carries out the reaction sulfate(out) + ATP + H2O = sulfate(in) + ADP + phosphate + H(+). The enzyme catalyses thiosulfate(out) + ATP + H2O = thiosulfate(in) + ADP + phosphate + H(+). Its function is as follows. Part of the ABC transporter complex CysAWTP involved in sulfate/thiosulfate import. Responsible for energy coupling to the transport system. This is Sulfate/thiosulfate import ATP-binding protein CysA from Bacillus cereus (strain ATCC 10987 / NRS 248).